The chain runs to 530 residues: SHPLWFPNTLAPSWLNGEYYGDRGFDPAGLAADPDTFERMRIAEVYHGRLAMLAVVGALVPDYLGKGIWYEAAQNAGIGLKEVAIFTAAYGVFEVARGVKENSDPTTIYPGFDPLNLTTDYTKEAEIKNGRLALTALLGFEVQRHVVGGSPLANLAEHLQQPLQRNIADSIMHQWPVAMFASSGHKDGLWFPNAEPPALLTGEYPADRGFDPLNLAADPDVYARMRVAEVFHGRLAMLCTVGCIVPELLGKGAWFEAGDSVDGLKLGFITMAIAAPTEYWRGQGGFNWQKGELDRSYPGFDPLNLTTDYTRAAEVKNGRLALTAVAGLTAQYLATGESPLANLSAHLANPIGANITTNLAMFASSGAKEERELWFPNIVPPRYLTGEAYGDKGFDPAGLAADPVTFERMQVAEVFHCRLSMLALVGCLVPELLGNGAWFQIWDKVDFNRFAVVALQVVAPLEYWRGNGGFLWNDEETVDQSYPGFDPLNLTTEYTKEAEIKNGRLAMNGMFGLEVQSHVTGKSPINNLID.

The protein localises to the plastid. It is found in the chloroplast. This Euglena gracilis protein is Light-harvesting complex I LH38 proteins.